The primary structure comprises 456 residues: Cytochrome P450 monooxygenase avaH (456 aa).

A helical transmembrane segment spans residues 243-263 (LMSYFVSVFLVNVALFNAVSI). Heme is bound at residue cysteine 403.

This sequence belongs to the cytochrome P450 family. Heme is required as a cofactor.

Its subcellular location is the membrane. It functions in the pathway secondary metabolite biosynthesis. Cytochrome P450 monooxygenase; part of the cluster that mediates the biosynthesis of a highly modified cyclo-arginine-tryptophan dipeptide (cRW). The first step of the pathway is perfornmed by the arginine-containing cyclodipeptide synthase (RCPDS) avaA that acts as the scaffold-generating enzyme and is responsible for formation of the cyclo-Arg-Trp (cRW) diketopiperazine. AvaB then acts as a multifunctional flavoenzyme that is responsible for generating the cyclo-Arg-formylkynurenine DKP, which can be deformylated by avaC. AvaB then further catalyzes an additional N-oxidation followed by cyclization and dehydration. The next step is an N-acetylation of the guanidine group catalyzed by the arginine N-acetyltransferase avaD. The roles of the additional enzymes identified within the ava cluster still have to be determined. In Aspergillus versicolor, this protein is Cytochrome P450 monooxygenase avaH.